The primary structure comprises 378 residues: Tetraacyldisaccharide 4'-kinase (378 aa).

63 to 70 (AVGGAGKT) is an ATP binding site.

Belongs to the LpxK family.

The catalysed reaction is a lipid A disaccharide + ATP = a lipid IVA + ADP + H(+). Its pathway is glycolipid biosynthesis; lipid IV(A) biosynthesis; lipid IV(A) from (3R)-3-hydroxytetradecanoyl-[acyl-carrier-protein] and UDP-N-acetyl-alpha-D-glucosamine: step 6/6. Functionally, transfers the gamma-phosphate of ATP to the 4'-position of a tetraacyldisaccharide 1-phosphate intermediate (termed DS-1-P) to form tetraacyldisaccharide 1,4'-bis-phosphate (lipid IVA). The chain is Tetraacyldisaccharide 4'-kinase from Anaeromyxobacter sp. (strain K).